Here is a 148-residue protein sequence, read N- to C-terminus: uncharacterized protein (148 aa).

The first 23 residues, 1 to 23, serve as a signal peptide directing secretion; sequence MKALVAVSAVAVVALLGVSSAQA. The segment at 22–45 is disordered; it reads QADPEADPGAGEANYGGPPSSPRL.

This sequence to M.leprae ML2452.

This is an uncharacterized protein from Mycobacterium bovis (strain ATCC BAA-935 / AF2122/97).